Consider the following 64-residue polypeptide: UPF0337 protein SH2043 (64 aa).

Residues M1 to K64 are disordered. A compositionally biased stretch (basic and acidic residues) spans D22 to K64.

The protein belongs to the UPF0337 (CsbD) family.

The chain is UPF0337 protein SH2043 from Staphylococcus haemolyticus (strain JCSC1435).